The chain runs to 1017 residues: Disease resistance protein RML1B (1017 aa).

The 165-residue stretch at 12 to 176 folds into the TIR domain; it reads YKFNVFASFH…KIARDVLDKL (165 aa). The active site involves E87. Residues 191 to 447 enclose the NB-ARC domain; sequence EAHLREIKSL…HIAIFFNKED (257 aa). 10 LRR repeats span residues 539 to 562, 583 to 605, 606 to 628, 629 to 652, 654 to 675, 676 to 698, 699 to 724, 738 to 760, 761 to 782, and 784 to 809; these read ISRISEVSIRKKAFKRMPNLQFLK, PCLLRLLDWKAYPSKSLPPTFNP, EHLVELNMHSSQLEYLWQGTQPL, KNLKKMDLSQSKNLKQLPDLSNAT, LEYLYLMGCESLIEIPSSISHL, HKLEMLATVGCINLEVIPAHMNL, ESLQTVYLGGCSRLRNIPVMSTNIRY, CPGLKTLDVSGSRNFKGLLTHLP, TSLTTLNLCYTDIERIPDCFKS, and HQLKGVNLRGCRRLASLPELPRSLLT.

The catalysed reaction is NAD(+) + H2O = ADP-D-ribose + nicotinamide + H(+). Functionally, TIR-NB-LRR receptor-like protein that confers resistance to the pathogen Leptosphaeria maculans (blackleg disease). This is Disease resistance protein RML1B from Arabidopsis thaliana (Mouse-ear cress).